A 303-amino-acid chain; its full sequence is MIERFQGDEGRRRLVATLTEHRLVANRQELAERLVAVGELMEAPAGTTFINQGDQTSEVFFIIAGKVEVRVNGKVVANRFPGDSVGEMAAIEPSQPRAASVIPVEDTVLIKVSEAEFSAAAEQFPDVWRRIAATLARRLAERNHLVTAQRERVRVFIMSSVEALPIVDLLIKQFAHDPFLAVAWKNGVFRASQYTLDELEAELDDSDFAVAVAHGDDVLITRDDEWPTIRDNVILEFGLFMGRLGRRRAFLMEPRDVDLKLPSDLAGLTTIPYRYVKGKDAEHYIAPACARLRELILAAGAKD.

14 to 138 (LVATLTEHRL…RRIAATLARR (125 aa)) lines the a nucleoside 3',5'-cyclic phosphate pocket. Positions 154–273 (RVFIMSSVEA…DLAGLTTIPY (120 aa)) are TIR-like.

It localises to the cytoplasm. The catalysed reaction is NAD(+) + H2O = ADP-D-ribose + nicotinamide + H(+). Functionally, pycsar (pyrimidine cyclase system for antiphage resistance) provides immunity against bacteriophage. The pyrimidine cyclase (PycC) synthesizes cyclic nucleotides in response to infection; these serve as specific second messenger signals. The signals activate the adjacent effector, leading to bacterial cell death and abortive phage infection. A clade B Pycsar system. Its function is as follows. The effector gene of a two-gene Pycsar system. Expression of this and adjacent uridylate cyclase XpPycC (AC P0DV28) confers resistance to bacteriophage T7. When cells expressing the Pycsar system are infected by phage T7 at low multiplicity of infection (0.2 MOI) the culture survivey, at 2.0 MOI bacteria enter growth arrest. The same cells enter growth arrest after exposure to 2.5 mM cUMP but not cCMP; the effector protein responds only to the cUMP usually produced by its cognate NTP cyclase. NAD(+) levels in infected cells are depleted between 5 and 10 minutes after infection with T7 at MOI of 2. Probably only responds to cUMP. The polypeptide is Pycsar effector protein XpPycTIR (Xanthomonas perforans).